The sequence spans 91 residues: Antitoxin RelJ (91 aa).

The protein belongs to the phD/YefM antitoxin family. Homodimer.

In terms of biological role, antitoxin component of a type II toxin-antitoxin (TA) system. A probable antitoxin for the putative mRNA interferase RelK. The protein is Antitoxin RelJ (relJ) of Mycobacterium tuberculosis (strain CDC 1551 / Oshkosh).